The chain runs to 143 residues: Ribosome-binding factor A (143 aa).

Positions 123-143 (DKSLQENYKQNDKETKAEKLR) are disordered.

The protein belongs to the RbfA family. In terms of assembly, monomer. Binds 30S ribosomal subunits, but not 50S ribosomal subunits or 70S ribosomes.

It is found in the cytoplasm. Functionally, one of several proteins that assist in the late maturation steps of the functional core of the 30S ribosomal subunit. Associates with free 30S ribosomal subunits (but not with 30S subunits that are part of 70S ribosomes or polysomes). Required for efficient processing of 16S rRNA. May interact with the 5'-terminal helix region of 16S rRNA. This is Ribosome-binding factor A from Francisella tularensis subsp. novicida (strain U112).